The following is a 253-amino-acid chain: Ferritin-2, chloroplastic (253 aa).

A chloroplast-targeting transit peptide spans methionine 1 to alanine 45. Positions alanine 46–arginine 82 are extension peptide (EP). A Ferritin-like diiron domain is found at histidine 83 to glycine 236. Residues glutamate 100, glutamate 135, histidine 138, glutamate 184, and glutamine 218 each coordinate Fe cation.

It belongs to the ferritin family. As to quaternary structure, oligomer of 24 subunits. There are two types of subunits: L (light) chain and H (heavy) chain. The major chain can be light or heavy, depending on the species and tissue type. The functional molecule forms a roughly spherical shell with a diameter of 12 nm and contains a central cavity into which the insoluble mineral iron core is deposited.

It localises to the plastid. Its subcellular location is the chloroplast. The catalysed reaction is 4 Fe(2+) + O2 + 4 H(+) = 4 Fe(3+) + 2 H2O. Functionally, stores iron in a soluble, non-toxic, readily available form. Important for iron homeostasis. Has ferroxidase activity. Iron is taken up in the ferrous form and deposited as ferric hydroxides after oxidation. This Arabidopsis thaliana (Mouse-ear cress) protein is Ferritin-2, chloroplastic (FER2).